Here is a 452-residue protein sequence, read N- to C-terminus: uncharacterized protein (452 aa).

72 to 79 (GPPGSGKT) contacts ATP.

The protein belongs to the AAA ATPase family. RarA/MGS1/WRNIP1 subfamily.

This is an uncharacterized protein from Mycobacterium tuberculosis (strain ATCC 25618 / H37Rv).